The primary structure comprises 149 residues: Transthyretin (149 aa).

The N-terminal stretch at 1-22 is a signal peptide; that stretch reads MAFHSLLLLCLAGLAFVSETAA. Cys-32 bears the Sulfocysteine mark. Residue Lys-37 coordinates L-thyroxine. Residue Glu-64 is modified to 4-carboxyglutamate. The L-thyroxine site is built by Glu-76 and Ser-139.

Belongs to the transthyretin family. Homotetramer. Dimer of dimers. In the homotetramer, subunits assemble around a central channel that can accommodate two ligand molecules. Interacts with RBP4. Sulfonation of the reactive cysteine Cys-32 enhances the stability of the native conformation of TTR, avoiding misassembly of the protein leading to amyloid formation. As to expression, detected in liver.

The protein resides in the secreted. In terms of biological role, thyroid hormone-binding protein. Probably transports thyroxine from the bloodstream to the brain. The protein is Transthyretin (TTR) of Macropus giganteus (Eastern gray kangaroo).